Consider the following 69-residue polypeptide: Putative membrane protein insertion efficiency factor (69 aa).

It belongs to the UPF0161 family.

The protein localises to the cell inner membrane. Could be involved in insertion of integral membrane proteins into the membrane. This is Putative membrane protein insertion efficiency factor from Magnetococcus marinus (strain ATCC BAA-1437 / JCM 17883 / MC-1).